Reading from the N-terminus, the 1188-residue chain is Integrin alpha-11 (1188 aa).

Residues 1 to 22 form the signal peptide; it reads MDLPRGLVVAWALSLWPGFTDT. The Extracellular segment spans residues 23–1141; that stretch reads FNMDTRKPRV…ISKQEDWQVP (1119 aa). FG-GAP repeat units lie at residues 24-85 and 91-151; these read NMDT…NCTK and VTLS…FSKT. An intrachain disulfide couples C76 to C83. N82 and N95 each carry an N-linked (GlcNAc...) asparagine glycan. Cystine bridges form between C121/C139 and C129/C159. A VWFA domain is found at 164–345; it reads DIVIVLDGSN…AALKDIVDAL (182 aa). Residues N291, N331, N358, N449, and N462 are each glycosylated (N-linked (GlcNAc...) asparagine). 5 FG-GAP repeats span residues 355 to 406, 411 to 461, 462 to 527, 528 to 586, and 590 to 650; these read TNKN…VIPL, LKEF…TMHN, NRSL…LFVY, NGTL…SILK, and QRIT…FEPS. Ca(2+) is bound by residues D488, D490, D492, and D496. N528 carries an N-linked (GlcNAc...) asparagine glycan. Ca(2+) is bound by residues D551, N553, D555, D559, D613, N615, D617, and D621. Residue N642 is glycosylated (N-linked (GlcNAc...) asparagine). 3 disulfides stabilise this stretch: C659/C668, C674/C729, and C781/C787. A glycan (N-linked (GlcNAc...) asparagine) is linked at N694. N-linked (GlcNAc...) asparagine glycosylation is present at N857. C881 and C893 are disulfide-bonded. N-linked (GlcNAc...) asparagine glycans are attached at residues N894, N973, N1031, N1039, and N1059. Residues 1142–1164 traverse the membrane as a helical segment; that stretch reads IWIIVGSTLGGLLLLALLVLALW. The Cytoplasmic segment spans residues 1165–1188; that stretch reads KLGFFRSARRRREPGLDPTPKVLE.

Belongs to the integrin alpha chain family. In terms of assembly, heterodimer of an alpha and a beta subunit. Alpha-11 associates with beta-1. Interacts with RAB21. As to expression, according to PubMed:10464311, highest levels of expression in uterus and heart, intermediate levels in skeletal muscle and intermediate to low levels in pancreas, kidney and placenta. According to PubMed:10486209, also found in brain, colon, lung, small intestine, stomach, testis, salivary glands, thyroid glands and prostate. Very low levels in peripheral blood lymphocytes, fetal brain and fetal liver.

The protein localises to the membrane. Functionally, integrin alpha-11/beta-1 is a receptor for collagen. The sequence is that of Integrin alpha-11 (ITGA11) from Homo sapiens (Human).